Consider the following 319-residue polypeptide: Probable metallo-hydrolase YqjP (319 aa).

Zn(2+) is bound by residues histidine 67, histidine 69, aspartate 71, histidine 72, histidine 165, aspartate 184, and histidine 231.

Belongs to the metallo-beta-lactamase superfamily. Requires Zn(2+) as cofactor.

The sequence is that of Probable metallo-hydrolase YqjP (yqjP) from Bacillus subtilis (strain 168).